The primary structure comprises 120 residues: Large ribosomal subunit protein bL20 (120 aa).

It belongs to the bacterial ribosomal protein bL20 family.

Its function is as follows. Binds directly to 23S ribosomal RNA and is necessary for the in vitro assembly process of the 50S ribosomal subunit. It is not involved in the protein synthesizing functions of that subunit. The sequence is that of Large ribosomal subunit protein bL20 from Methylacidiphilum infernorum (isolate V4) (Methylokorus infernorum (strain V4)).